We begin with the raw amino-acid sequence, 136 residues long: Large ribosomal subunit protein uL16 (136 aa).

This sequence belongs to the universal ribosomal protein uL16 family. As to quaternary structure, part of the 50S ribosomal subunit.

Binds 23S rRNA and is also seen to make contacts with the A and possibly P site tRNAs. This chain is Large ribosomal subunit protein uL16, found in Elusimicrobium minutum (strain Pei191).